The sequence spans 526 residues: Acetyl-CoA hydrolase (526 aa).

G277–I281 provides a ligand contact to CoA. E302 (5-glutamyl coenzyme A thioester intermediate) is an active-site residue. Residues N392 and G396 each coordinate CoA.

It belongs to the acetyl-CoA hydrolase/transferase family.

Its subcellular location is the cytoplasm. The enzyme catalyses acetyl-CoA + H2O = acetate + CoA + H(+). Functionally, presumably involved in regulating the intracellular acetyl-CoA pool for fatty acid and cholesterol synthesis and fatty acid oxidation. The polypeptide is Acetyl-CoA hydrolase (ACH1) (Candida glabrata (strain ATCC 2001 / BCRC 20586 / JCM 3761 / NBRC 0622 / NRRL Y-65 / CBS 138) (Yeast)).